A 246-amino-acid chain; its full sequence is Small ribosomal subunit protein uS2 (246 aa).

This sequence belongs to the universal ribosomal protein uS2 family.

This Burkholderia vietnamiensis (strain G4 / LMG 22486) (Burkholderia cepacia (strain R1808)) protein is Small ribosomal subunit protein uS2.